The primary structure comprises 510 residues: Probable ADP-ribosylation factor-binding protein C1F3.05 (510 aa).

A VHS domain is found at Ala14–Pro150. The GAT domain maps to Leu177–Leu301. The GAE domain maps to Thr391–Leu510.

It localises to the golgi apparatus. The protein resides in the trans-Golgi network. Functionally, may play a role in the regulation of membrane traffic through the trans-Golgi network. This chain is Probable ADP-ribosylation factor-binding protein C1F3.05, found in Schizosaccharomyces pombe (strain 972 / ATCC 24843) (Fission yeast).